The sequence spans 129 residues: Small ribosomal subunit protein uS9 (129 aa).

This sequence belongs to the universal ribosomal protein uS9 family.

The polypeptide is Small ribosomal subunit protein uS9 (Helicobacter pylori (strain HPAG1)).